The following is a 428-amino-acid chain: Lysophosphatidic acid phosphatase type 6 (428 aa).

Residues 1–32 constitute a mitochondrion transit peptide; the sequence is MITGVFSMRLWTPVGVLTSLAYCLHQRRVALA. The substrate binding stretch occupies residues 58 to 168; sequence RHGARSPRKP…VFIRSTNIFR (111 aa). H59 functions as the Nucleophile in the catalytic mechanism. The Proton donor role is filled by D335.

Belongs to the histidine acid phosphatase family. In terms of assembly, monomer.

It is found in the mitochondrion. It catalyses the reaction a phosphate monoester + H2O = an alcohol + phosphate. It carries out the reaction 1-(9Z-octadecenoyl)-sn-glycero-3-phosphate + H2O = 1-(9Z-octadecenoyl)-sn-glycerol + phosphate. In terms of biological role, hydrolyzes lysophosphatidic acid (LPA) containing a medium length fatty acid chain to the corresponding monoacylglycerol. Has highest activity with lysophosphatidic acid containing myristate (C14:0), monounsaturated oleate (C18:1) or palmitate (C16:0), and lower activity with C18:0 and C6:0 lysophosphatidic acid. The chain is Lysophosphatidic acid phosphatase type 6 (ACP6) from Pongo abelii (Sumatran orangutan).